The following is a 130-amino-acid chain: Large ribosomal subunit protein eL22 (130 aa).

It belongs to the eukaryotic ribosomal protein eL22 family.

The sequence is that of Large ribosomal subunit protein eL22 (rpl-22) from Caenorhabditis elegans.